The primary structure comprises 73 residues: Somatostatin-2 (73 aa).

A propeptide spanning residues 1–45 (SAGLLTQEWSAVEDLLAQMSLPEADAQRDAEMVSTATGGGRMNQE) is cleaved from the precursor. The disordered stretch occupies residues 23-58 (EADAQRDAEMVSTATGGGRMNQESIEPPNNLPPRER). Cysteines 62 and 73 form a disulfide.

The protein belongs to the somatostatin family.

The protein resides in the secreted. Somatostatin inhibits the release of somatotropin. In Platichthys flesus (European flounder), this protein is Somatostatin-2 (sst2).